A 390-amino-acid chain; its full sequence is Phosphoglycerate kinase (390 aa).

Substrate contacts are provided by residues 21–23 (DLN), Arg36, 59–62 (HLGR), Arg112, and Arg145. ATP contacts are provided by residues Lys196, Glu317, and 343–346 (GGDT).

The protein belongs to the phosphoglycerate kinase family. In terms of assembly, monomer.

The protein localises to the cytoplasm. It catalyses the reaction (2R)-3-phosphoglycerate + ATP = (2R)-3-phospho-glyceroyl phosphate + ADP. Its pathway is carbohydrate degradation; glycolysis; pyruvate from D-glyceraldehyde 3-phosphate: step 2/5. This chain is Phosphoglycerate kinase, found in Cellvibrio japonicus (strain Ueda107) (Pseudomonas fluorescens subsp. cellulosa).